We begin with the raw amino-acid sequence, 110 residues long: Nucleoid-associated protein CbuK_1603 (110 aa).

It belongs to the YbaB/EbfC family. As to quaternary structure, homodimer.

It is found in the cytoplasm. The protein resides in the nucleoid. Its function is as follows. Binds to DNA and alters its conformation. May be involved in regulation of gene expression, nucleoid organization and DNA protection. This Coxiella burnetii (strain CbuK_Q154) (Coxiella burnetii (strain Q154)) protein is Nucleoid-associated protein CbuK_1603.